Here is a 256-residue protein sequence, read N- to C-terminus: MLQVQTIPSRQDNYIWLIKQGNQAIVVDPGESAPVIERLRQQSLNLKAIFVTHHHHDHVDGVAELLALYPQCAVYGPQITLTDVPQLQTMRDQDLISFPDLDLTFTVWHTPGHTAEHIVFHGHGALFCGDTLFSGGCGRLFSGTAEQMYHSLQRLASLPEDTLVYPAHEYTYNNLSYCLQAEPDNVFTIKRIKEVSKLRQQGCPTLPSTIGIEKQSNVFLRTHMPSVAVFAQNSSELYLENEIQIFAILREKKNNL.

Residues histidine 53, histidine 55, aspartate 57, histidine 58, histidine 113, aspartate 130, and histidine 168 each coordinate Zn(2+).

This sequence belongs to the metallo-beta-lactamase superfamily. Glyoxalase II family. Monomer. Requires Zn(2+) as cofactor.

The enzyme catalyses an S-(2-hydroxyacyl)glutathione + H2O = a 2-hydroxy carboxylate + glutathione + H(+). The protein operates within secondary metabolite metabolism; methylglyoxal degradation; (R)-lactate from methylglyoxal: step 2/2. Thiolesterase that catalyzes the hydrolysis of S-D-lactoyl-glutathione to form glutathione and D-lactic acid. This Tolumonas auensis (strain DSM 9187 / NBRC 110442 / TA 4) protein is Hydroxyacylglutathione hydrolase.